The chain runs to 477 residues: Ribulose bisphosphate carboxylase large chain (477 aa).

A propeptide spanning residues 1-2 (MS) is cleaved from the precursor. N-acetylproline is present on P3. K14 carries the post-translational modification N6,N6,N6-trimethyllysine. The substrate site is built by N123 and T173. K175 functions as the Proton acceptor in the catalytic mechanism. Substrate is bound at residue K177. 3 residues coordinate Mg(2+): K201, D203, and E204. K201 bears the N6-carboxylysine mark. H294 serves as the catalytic Proton acceptor. Substrate-binding residues include R295, H327, and S379.

It belongs to the RuBisCO large chain family. Type I subfamily. In terms of assembly, heterohexadecamer of 8 large chains and 8 small chains; disulfide-linked. The disulfide link is formed within the large subunit homodimers. It depends on Mg(2+) as a cofactor. In terms of processing, the disulfide bond which can form in the large chain dimeric partners within the hexadecamer appears to be associated with oxidative stress and protein turnover.

It localises to the plastid. It is found in the chloroplast. It carries out the reaction 2 (2R)-3-phosphoglycerate + 2 H(+) = D-ribulose 1,5-bisphosphate + CO2 + H2O. It catalyses the reaction D-ribulose 1,5-bisphosphate + O2 = 2-phosphoglycolate + (2R)-3-phosphoglycerate + 2 H(+). Functionally, ruBisCO catalyzes two reactions: the carboxylation of D-ribulose 1,5-bisphosphate, the primary event in carbon dioxide fixation, as well as the oxidative fragmentation of the pentose substrate in the photorespiration process. Both reactions occur simultaneously and in competition at the same active site. The sequence is that of Ribulose bisphosphate carboxylase large chain from Persea americana (Avocado).